The following is a 253-amino-acid chain: Triosephosphate isomerase, cytosolic (253 aa).

2 residues coordinate substrate: asparagine 10 and lysine 12. Histidine 96 (electrophile) is an active-site residue. Catalysis depends on glutamate 166, which acts as the Proton acceptor.

It belongs to the triosephosphate isomerase family. As to quaternary structure, homodimer. In terms of tissue distribution, starchy endosperm.

It is found in the cytoplasm. The catalysed reaction is D-glyceraldehyde 3-phosphate = dihydroxyacetone phosphate. The protein operates within carbohydrate biosynthesis; gluconeogenesis. Its pathway is carbohydrate degradation; glycolysis; D-glyceraldehyde 3-phosphate from glycerone phosphate: step 1/1. This is Triosephosphate isomerase, cytosolic from Hordeum vulgare (Barley).